Here is a 282-residue protein sequence, read N- to C-terminus: Deoxyribonuclease-1 (282 aa).

Positions 1-22 (MRGMKLLGALLALAALLQGAVS) are cleaved as a signal peptide. The N-linked (GlcNAc...) asparagine glycan is linked to Asn40. Glu100 is a catalytic residue. An intrachain disulfide couples Cys123 to Cys126. Asn128 is a glycosylation site (N-linked (GlcNAc...) asparagine). His156 is a catalytic residue. A disulfide bridge links Cys195 with Cys231.

Belongs to the DNase I family. Requires Ca(2+) as cofactor. Mg(2+) serves as cofactor. In terms of tissue distribution, principally in tissues of the digestive system. Highest levels found in urine, but also relatively abundant in semen and saliva.

It localises to the secreted. It is found in the zymogen granule. The protein resides in the nucleus envelope. The catalysed reaction is Endonucleolytic cleavage to 5'-phosphodinucleotide and 5'-phosphooligonucleotide end-products.. Serum endocuclease secreted into body fluids by a wide variety of exocrine and endocrine organs. Expressed by non-hematopoietic tissues and preferentially cleaves protein-free DNA. Among other functions, seems to be involved in cell death by apoptosis. Binds specifically to G-actin and blocks actin polymerization. Together with DNASE1L3, plays a key role in degrading neutrophil extracellular traps (NETs). NETs are mainly composed of DNA fibers and are released by neutrophils to bind pathogens during inflammation. Degradation of intravascular NETs by DNASE1 and DNASE1L3 is required to prevent formation of clots that obstruct blood vessels and cause organ damage following inflammation. This is Deoxyribonuclease-1 from Homo sapiens (Human).